The primary structure comprises 131 residues: Prefoldin subunit beta (131 aa).

2 disordered regions span residues 19–41 (LQET…RESE) and 112–131 (LQGG…AGGA). A compositionally biased stretch (low complexity) spans 20-35 (QETAQQVAQQKQQAET). The span at 114–131 (GGAGGGPMGPGGPGAGGA) shows a compositional bias: gly residues.

The protein belongs to the prefoldin subunit beta family. Heterohexamer of two alpha and four beta subunits.

It localises to the cytoplasm. Functionally, molecular chaperone capable of stabilizing a range of proteins. Seems to fulfill an ATP-independent, HSP70-like function in archaeal de novo protein folding. The chain is Prefoldin subunit beta from Natronomonas pharaonis (strain ATCC 35678 / DSM 2160 / CIP 103997 / JCM 8858 / NBRC 14720 / NCIMB 2260 / Gabara) (Halobacterium pharaonis).